The following is a 356-amino-acid chain: Septin-2A (356 aa).

The region spanning 33–305 is the Septin-type G domain; the sequence is KGFEFTLMVV…ENFRSERLKK (273 aa). Residues 43-50 are G1 motif; sequence GESGLGKS. GTP is bound by residues 43–50, Thr-77, Gly-103, 182–190, Gly-240, and Arg-255; these read GESGLGKS and KADTLTLRE. Residues 100-103 form a G3 motif region; it reads DTPG. Residues 181–184 are G4 motif; that stretch reads AKAD. Residues 259 to 269 are important for dimerization; it reads WGVVEVENTEH.

This sequence belongs to the TRAFAC class TrmE-Era-EngA-EngB-Septin-like GTPase superfamily. Septin GTPase family. As to quaternary structure, septins polymerize into heterooligomeric protein complexes that form filaments, and associate with cellular membranes, actin filaments and microtubules. GTPase activity is required for filament formation. Can form heterooligomers with other family members and form filaments. Interacts with wdpcp.

It is found in the cytoplasm. The protein resides in the cytoskeleton. It localises to the spindle. Its subcellular location is the cleavage furrow. The protein localises to the midbody. It is found in the cell projection. The protein resides in the cilium membrane. Filament-forming cytoskeletal GTPase. Required for normal organization of the actin cytoskeleton. Plays a role in the biogenesis of polarized columnar-shaped epithelium. Required for the progression through mitosis through regulation of chromosome congression. During anaphase, may be required for chromosome segregation and spindle elongation. Probably plays a role in ciliogenesis and collective cell movements including convergent extension during gastrulation. In cilia, required for the integrity of the diffusion barrier at the base of the primary cilium that prevents diffusion of transmembrane proteins between the cilia and plasma membranes. Controls cell shape and not polarization of cells during convergent extension. This is Septin-2A (sept2-a) from Xenopus laevis (African clawed frog).